Here is a 248-residue protein sequence, read N- to C-terminus: ATP synthase subunit a, chloroplastic (248 aa).

The next 5 membrane-spanning stretches (helical) occupy residues Q38–V58, V96–L116, I135–T155, L200–L220, and G221–G241.

It belongs to the ATPase A chain family. As to quaternary structure, F-type ATPases have 2 components, CF(1) - the catalytic core - and CF(0) - the membrane proton channel. CF(1) has five subunits: alpha(3), beta(3), gamma(1), delta(1), epsilon(1). CF(0) has four main subunits: a, b, b' and c.

The protein localises to the plastid. The protein resides in the chloroplast thylakoid membrane. In terms of biological role, key component of the proton channel; it plays a direct role in the translocation of protons across the membrane. This is ATP synthase subunit a, chloroplastic from Nuphar advena (Common spatterdock).